The sequence spans 160 residues: MVPKLFTSPICLLLLLGLMGVEGSLHAKPGQFTWAQWFEIQHINMTSGQCTNAMLVINNYQRRCKNQNTFLLTTFADVVHVCGNPSMPCPSNTSLNNCHHSGVQVPLIHCNLTTPSRRISNCRYTQTTANKYYIVACNNSDPVRDPPQYPVVPVHLDRVI.

The first 27 residues, 1 to 27 (MVPKLFTSPICLLLLLGLMGVEGSLHA), serve as a signal peptide directing secretion. C-linked (Man) tryptophan glycosylation occurs at Trp34. His42 functions as the Proton acceptor in the catalytic mechanism. Residue Asn44 is glycosylated (N-linked (GlcNAc...) asparagine). 4 disulfide bridges follow: Cys50/Cys110, Cys64/Cys122, Cys82/Cys137, and Cys89/Cys98. 3'-nitrotyrosine is present on Tyr60. 65 to 69 (KNQNT) is a binding site for substrate. Asn92, Asn111, and Asn138 each carry an N-linked (GlcNAc...) asparagine glycan. His155 acts as the Proton donor in catalysis.

This sequence belongs to the pancreatic ribonuclease family. Interacts with and forms a tight 1:1 complex with RNH1. Dimerization of two such complexes may occur.

The protein resides in the lysosome. The protein localises to the cytoplasmic granule. The catalysed reaction is an [RNA] containing cytidine + H2O = an [RNA]-3'-cytidine-3'-phosphate + a 5'-hydroxy-ribonucleotide-3'-[RNA].. It carries out the reaction an [RNA] containing uridine + H2O = an [RNA]-3'-uridine-3'-phosphate + a 5'-hydroxy-ribonucleotide-3'-[RNA].. In terms of biological role, this is a non-secretory ribonuclease. It is a pyrimidine specific nuclease with a slight preference for U. Cytotoxin and helminthotoxin. Possesses a wide variety of biological activities. In Papio hamadryas (Hamadryas baboon), this protein is Non-secretory ribonuclease (RNASE2).